The following is a 1160-amino-acid chain: ATP-dependent helicase/deoxyribonuclease subunit B (1160 aa).

The protein belongs to the helicase family. AddB/RexB type 2 subfamily. As to quaternary structure, heterodimer of AddA and RexB. It depends on Mg(2+) as a cofactor.

In terms of biological role, the heterodimer acts as both an ATP-dependent DNA helicase and an ATP-dependent, dual-direction single-stranded exonuclease. Recognizes the chi site generating a DNA molecule suitable for the initiation of homologous recombination. This subunit has 5' -&gt; 3' nuclease activity but not helicase activity. This is ATP-dependent helicase/deoxyribonuclease subunit B from Lactobacillus helveticus (strain DPC 4571).